The sequence spans 333 residues: Cell division protein ZipA (333 aa).

Over 1–5 the chain is Periplasmic; that stretch reads MQELR. The helical transmembrane segment at 6–26 threads the bilayer; it reads LVLILVGALAIAALLFHGLWT. Over 27-333 the chain is Cytoplasmic; it reads SRKETSSKFG…KQRVKVFCRK (307 aa). Positions 72-81 are enriched in basic and acidic residues; the sequence is KEPAFAREEV. The tract at residues 72–119 is disordered; it reads KEPAFAREEVPTSDDPLFEGTVSSESNKFTQQEKPTVQQAQPQPQPQP. Over residues 92 to 107 the composition is skewed to polar residues; the sequence is TVSSESNKFTQQEKPT. A compositionally biased stretch (low complexity) spans 108–119; the sequence is VQQAQPQPQPQP.

Belongs to the ZipA family. Interacts with FtsZ via their C-terminal domains.

It is found in the cell inner membrane. In terms of biological role, essential cell division protein that stabilizes the FtsZ protofilaments by cross-linking them and that serves as a cytoplasmic membrane anchor for the Z ring. Also required for the recruitment to the septal ring of downstream cell division proteins. This is Cell division protein ZipA from Aliivibrio fischeri (strain ATCC 700601 / ES114) (Vibrio fischeri).